A 94-amino-acid polypeptide reads, in one-letter code: Putative membrane protein insertion efficiency factor (94 aa).

This sequence belongs to the UPF0161 family.

It is found in the cell inner membrane. Its function is as follows. Could be involved in insertion of integral membrane proteins into the membrane. The sequence is that of Putative membrane protein insertion efficiency factor from Albidiferax ferrireducens (strain ATCC BAA-621 / DSM 15236 / T118) (Rhodoferax ferrireducens).